Consider the following 1116-residue polypeptide: Eukaryotic translation initiation factor 2-alpha kinase 3 (1116 aa).

An N-terminal signal peptide occupies residues Met-1 to Ala-29. Residues Ala-30–Asp-514 lie on the Lumenal side of the membrane. Residues Ala-77–Arg-101 are disordered. Asn-258 is a glycosylation site (N-linked (GlcNAc...) asparagine). Residues Pro-515 to Ala-535 form a helical membrane-spanning segment. At Thr-536 to Asn-1116 the chain is on the cytoplasmic side. The tract at residues Arg-550–Glu-571 is disordered. In terms of domain architecture, Protein kinase spans Phe-593–Phe-1077. Leu-599–Val-607 lines the ATP pocket. The residue at position 619 (Tyr-619) is a Phosphotyrosine; by autocatalysis. Lys-622 provides a ligand contact to ATP. An insert loop region spans residues Glu-647–Met-888. Ser-715 carries the post-translational modification Phosphoserine. Thr-802 is modified (phosphothreonine). Positions Lys-841–Leu-863 are disordered. The segment covering Ser-844–Ser-856 has biased composition (low complexity). Asp-937 functions as the Proton acceptor in the catalytic mechanism. A Phosphothreonine modification is found at Thr-982. A disordered region spans residues Gln-1090–Asn-1116. A Phosphoserine modification is found at Ser-1094. The segment covering Gln-1105–Asn-1116 has biased composition (polar residues).

This sequence belongs to the protein kinase superfamily. Ser/Thr protein kinase family. GCN2 subfamily. As to quaternary structure, forms dimers with HSPA5/BIP in resting cells. Homotetramerizes in response to endoplasmic reticulum (ER) stress, leading to its activation. Interacts with HSP90B1/GRP94. Interacts with DNAJC3; inhibiting EIF2AK3/PERK activity. Interacts with ATAD3A; ATAD3A and EIF2S1/eIF-2-alpha occupy a common binding site within the cytoplasmic loop of EIF2AK3/PERK, leading to prevent EIF2AK3/PERK association with its substrate EIF2S1/eIF-2-alpha. Interacts with MFN2. Interacts with TMEM33. Interacts with PDIA6. Interacts with LACC1. In terms of processing, oligomerization of the N-terminal ER luminal domain by ER stress promotes EIF2AK3/PERK trans-autophosphorylation of the C-terminal cytoplasmic kinase domain at multiple residues including Thr-982 on the kinase activation loop. Autophosphorylated at Tyr-619 following endoplasmic reticulum stress, leading to activate its activity. Dephosphorylated at Tyr-619 by PTPN1/PTP1B, leading to inactivate its enzyme activity. Phosphorylation at Thr-802 by AKT (AKT1, AKT2 and/or AKT3) inactivates EIF2AK3/PERK. ADP-ribosylated by PARP16 upon ER stress, which increases kinase activity. Ubiquitous. A high level expression is seen in secretory tissues.

It is found in the endoplasmic reticulum membrane. The enzyme catalyses L-seryl-[protein] + ATP = O-phospho-L-seryl-[protein] + ADP + H(+). It carries out the reaction L-threonyl-[protein] + ATP = O-phospho-L-threonyl-[protein] + ADP + H(+). The catalysed reaction is L-tyrosyl-[protein] + ATP = O-phospho-L-tyrosyl-[protein] + ADP + H(+). Its activity is regulated as follows. Inhibited by HSPA5/BIP in absence of stress. Perturbation in protein folding in the endoplasmic reticulum (ER) promotes reversible dissociation from HSPA5/BIP and oligomerization, resulting in trans-autophosphorylation and kinase activity induction. Inactivated following phosphorylation at Thr-802 by AKT (AKT1, AKT2 and/or AKT3). Inhibited by ATAD3A at mitochondria-endoplasmic reticulum contact sites, providing a safe haven for mitochondrial protein translation during ER stress. Its function is as follows. Metabolic-stress sensing protein kinase that phosphorylates the alpha subunit of eukaryotic translation initiation factor 2 (EIF2S1/eIF-2-alpha) in response to various stress, such as unfolded protein response (UPR). Key effector of the integrated stress response (ISR) to unfolded proteins: EIF2AK3/PERK specifically recognizes and binds misfolded proteins, leading to its activation and EIF2S1/eIF-2-alpha phosphorylation. EIF2S1/eIF-2-alpha phosphorylation in response to stress converts EIF2S1/eIF-2-alpha in a global protein synthesis inhibitor, leading to a global attenuation of cap-dependent translation, while concomitantly initiating the preferential translation of ISR-specific mRNAs, such as the transcriptional activators ATF4 and QRICH1, and hence allowing ATF4- and QRICH1-mediated reprogramming. The EIF2AK3/PERK-mediated unfolded protein response increases mitochondrial oxidative phosphorylation by promoting ATF4-mediated expression of COX7A2L/SCAF1, thereby increasing formation of respiratory chain supercomplexes. In contrast to most subcellular compartments, mitochondria are protected from the EIF2AK3/PERK-mediated unfolded protein response due to EIF2AK3/PERK inhibition by ATAD3A at mitochondria-endoplasmic reticulum contact sites. In addition to EIF2S1/eIF-2-alpha, also phosphorylates NFE2L2/NRF2 in response to stress, promoting release of NFE2L2/NRF2 from the BCR(KEAP1) complex, leading to nuclear accumulation and activation of NFE2L2/NRF2. Serves as a critical effector of unfolded protein response (UPR)-induced G1 growth arrest due to the loss of cyclin-D1 (CCND1). Involved in control of mitochondrial morphology and function. The sequence is that of Eukaryotic translation initiation factor 2-alpha kinase 3 from Homo sapiens (Human).